A 487-amino-acid chain; its full sequence is 3-octaprenyl-4-hydroxybenzoate carboxy-lyase (487 aa).

N172 contacts Mn(2+). Prenylated FMN-binding positions include 175 to 177 (IYR), 189 to 191 (RWL), and 194 to 195 (RG). E238 provides a ligand contact to Mn(2+). Residue D287 is the Proton donor of the active site.

This sequence belongs to the UbiD family. In terms of assembly, homohexamer. Prenylated FMN is required as a cofactor. Mn(2+) serves as cofactor.

It localises to the cell membrane. The enzyme catalyses a 4-hydroxy-3-(all-trans-polyprenyl)benzoate + H(+) = a 2-(all-trans-polyprenyl)phenol + CO2. It functions in the pathway cofactor biosynthesis; ubiquinone biosynthesis. Functionally, catalyzes the decarboxylation of 3-octaprenyl-4-hydroxy benzoate to 2-octaprenylphenol, an intermediate step in ubiquinone biosynthesis. In Actinobacillus pleuropneumoniae serotype 5b (strain L20), this protein is 3-octaprenyl-4-hydroxybenzoate carboxy-lyase.